We begin with the raw amino-acid sequence, 319 residues long: Aspartate carbamoyltransferase catalytic subunit (319 aa).

Residues arginine 65 and threonine 66 each coordinate carbamoyl phosphate. Lysine 93 is an L-aspartate binding site. Carbamoyl phosphate contacts are provided by arginine 115, histidine 149, and glutamine 152. Residues arginine 182 and arginine 237 each coordinate L-aspartate. Carbamoyl phosphate-binding residues include glycine 278 and proline 279.

Belongs to the aspartate/ornithine carbamoyltransferase superfamily. ATCase family. As to quaternary structure, heterododecamer (2C3:3R2) of six catalytic PyrB chains organized as two trimers (C3), and six regulatory PyrI chains organized as three dimers (R2).

The catalysed reaction is carbamoyl phosphate + L-aspartate = N-carbamoyl-L-aspartate + phosphate + H(+). It participates in pyrimidine metabolism; UMP biosynthesis via de novo pathway; (S)-dihydroorotate from bicarbonate: step 2/3. Catalyzes the condensation of carbamoyl phosphate and aspartate to form carbamoyl aspartate and inorganic phosphate, the committed step in the de novo pyrimidine nucleotide biosynthesis pathway. This is Aspartate carbamoyltransferase catalytic subunit from Dechloromonas aromatica (strain RCB).